The primary structure comprises 525 residues: Phospho-2-dehydro-3-deoxyheptonate aldolase 1, chloroplastic (525 aa).

Residues M1–S13 are compositionally biased toward polar residues. The tract at residues M1–A35 is disordered. Residues M1–A52 constitute a chloroplast transit peptide.

It belongs to the class-II DAHP synthase family.

The protein resides in the plastid. It localises to the chloroplast. It catalyses the reaction D-erythrose 4-phosphate + phosphoenolpyruvate + H2O = 7-phospho-2-dehydro-3-deoxy-D-arabino-heptonate + phosphate. Its pathway is metabolic intermediate biosynthesis; chorismate biosynthesis; chorismate from D-erythrose 4-phosphate and phosphoenolpyruvate: step 1/7. The chain is Phospho-2-dehydro-3-deoxyheptonate aldolase 1, chloroplastic (DHS1) from Arabidopsis thaliana (Mouse-ear cress).